Consider the following 138-residue polypeptide: Protein FAM136A (138 aa).

The protein belongs to the FAM136 family.

This is Protein FAM136A (fam136a) from Xenopus tropicalis (Western clawed frog).